Consider the following 319-residue polypeptide: Sliding-clamp-loader large subunit (319 aa).

Residues Glu12–Tyr15, Ile24, Gly53–Thr58, and Arg205 contribute to the ATP site.

The protein belongs to the Tevenvirinae sliding-clamp-loader large subunit family. As to quaternary structure, the sliding-clamp-loader consists of 4 large subunits and 1 small subunit. Interacts with the sliding clamp; this interaction allows the sliding-clamp-loader to open the sliding clamp. Part of the replicase complex that includes the DNA polymerase, the polymerase clamp, the clamp loader complex, the single-stranded DNA binding protein, the primase, the helicase and the helicase assembly factor.

In terms of biological role, forms the sliding-clamp-loader together with the small subunit. Functions as an ATPase enzyme. The clamp loader holds the clamp in an open conformation and places it onto the DNA. 4 ATP molecules must bind to the sliding-clamp-loader before the latter can open the sliding clamp. ATP hydrolysis triggers the detachment of the sliding clamp from the sliding-clamp-loader, freeing the sliding clamp to track along DNA. The sequence is that of Sliding-clamp-loader large subunit (44) from Enterobacteria phage T4 (Bacteriophage T4).